The following is a 369-amino-acid chain: Somatostatin receptor type 2 (369 aa).

Residues 1–43 are Extracellular-facing; it reads MDMAYELLNGSQPWLSSPFDLNGSVATANSSNQTEPYYDLTSN. 4 N-linked (GlcNAc...) asparagine glycosylation sites follow: Asn-9, Asn-22, Asn-29, and Asn-32. A helical transmembrane segment spans residues 44-67; that stretch reads AVLTFIYFVVCIIGLCGNTLVIYV. The Cytoplasmic segment spans residues 68–78; the sequence is ILRYAKMKTIT. Residues 79 to 103 form a helical membrane-spanning segment; that stretch reads NIYILNLAIADELFMLGLPFLAMQV. Over 104–118 the chain is Extracellular; it reads ALVHWPFGKAICRVV. A disulfide bridge links Cys-115 with Cys-193. A helical transmembrane segment spans residues 119–138; sequence MTVDGINQFTSIFCLTVMSI. The Cytoplasmic segment spans residues 139-161; it reads DRYLAVVHPIKSAKWRRPRTAKM. A helical membrane pass occupies residues 162–181; it reads INVAVWGVSLLVILPIMIYA. The Extracellular segment spans residues 182-207; sequence GLRSNQWGRSSCTINWPGESGAWYTG. The helical transmembrane segment at 208–229 threads the bilayer; that stretch reads FIIYAFILGFLVPLTIICLCYL. Residues 230-253 are Cytoplasmic-facing; that stretch reads FIIIKVKSSGIRVGSSKRKKSEKK. Residues 254-278 traverse the membrane as a helical segment; the sequence is VTRMVSIVVAVFIFCWLPFYIFNVS. The Extracellular segment spans residues 279 to 288; that stretch reads SVSVAISPTP. Residues 289–303 traverse the membrane as a helical segment; sequence ALKGMFDFVVVLTYA. The Cytoplasmic segment spans residues 304-369; that stretch reads NSCANPILYA…LLNGDLQTSI (66 aa). Cys-328 is lipidated: S-palmitoyl cysteine. Residues Ser-341, Ser-343, and Ser-348 each carry the phosphoserine modification. 2 positions are modified to phosphothreonine: Thr-353 and Thr-354.

This sequence belongs to the G-protein coupled receptor 1 family. In terms of assembly, homodimer and heterodimer with SSTR3 and SSTR5. Heterodimerization with SSTR3 inactivates SSTR3 receptor function. Heterodimerization with SSTR5 is enhanced by agonist stimulation of SSTR2 and increases SSTR2 cell growth inhibition activity. Following agonist stimulation, homodimers dissociate into monomers which is required for receptor internalization. Interacts with beta-arrestin; this interaction is necessary for receptor internalization and is destabilized by heterodimerization with SSTR5 which results in increased recycling of SSTR2 to the cell surface. Interacts (via C-terminus) with SHANK1 (via PDZ domain). In terms of processing, phosphorylated on serine and threonine residues in response to agonist stimulation, leading to receptor desensitization and rapid internalization. Phosphorylated to a greater extent on serine than threonine residues. Threonine phosphorylation is required for arrestin binding and receptor endocytosis but is not necessary for desensitization.

The protein localises to the cell membrane. The protein resides in the cytoplasm. Functionally, receptor for somatostatin-14 and -28. This receptor is coupled via pertussis toxin sensitive G proteins to inhibition of adenylyl cyclase. In addition it stimulates phosphotyrosine phosphatase and PLC via pertussis toxin insensitive as well as sensitive G proteins. Inhibits calcium entry by suppressing voltage-dependent calcium channels. Acts as the functionally dominant somatostatin receptor in pancreatic alpha- and beta-cells where it mediates the inhibitory effect of somatostatin-14 on hormone secretion. Inhibits cell growth through enhancement of MAPK1 and MAPK2 phosphorylation and subsequent up-regulation of CDKN1B. Stimulates neuronal migration and axon outgrowth and may participate in neuron development and maturation during brain development. Mediates negative regulation of insulin receptor signaling through PTPN6. Inactivates SSTR3 receptor function following heterodimerization. This Sus scrofa (Pig) protein is Somatostatin receptor type 2 (SSTR2).